Consider the following 465-residue polypeptide: MTATSGARTSDARTSGARTSDAGIGSPAAIELVGVAKDYQTRGRAVPAVSRVDLAIRPGEFFSLLGPSGCGKSTTLRMIAGFEEPTRGRILLQGRDVTAVPPNRRDVNLVFQSYALFPHLDVAGNVAFGLRRRGVKGRELRERVGAMLDLVELSELADRRPRELSGGQQQRVALARALVNRPAALLLDEPLGALDLKLRQTMQIQLKAIQREVGITFLYVTHDQGEALTMSDRIAVMNGGRVEQLASPRDIYERPRTRFVAGFIGTSNLLRRTVRALDAAGPGGRPTVVLDAGTDERLSAPLHPPTGPLRAGDQVELTVRPEKIEMSVSRPDGPGCALRGRIVEVVYLGTYTTYTVATHGGTEITVFWQNSTGAGNVAERGDEIWLSWLPEHSYVLPEPVALPEPVALPGSVVPPETVNQPDSVGPPDSIIPPHSVVAPDSVDPRETVVPAAGTSADPAAYRISH.

Over residues 1-18 the composition is skewed to polar residues; it reads MTATSGARTSDARTSGAR. The segment at 1–21 is disordered; sequence MTATSGARTSDARTSGARTSD. The ABC transporter domain maps to 30–264; sequence IELVGVAKDY…PRTRFVAGFI (235 aa). 66–73 lines the ATP pocket; the sequence is GPSGCGKS.

It belongs to the ABC transporter superfamily. Spermidine/putrescine importer (TC 3.A.1.11.1) family. In terms of assembly, the complex is composed of two ATP-binding proteins (PotA), two transmembrane proteins (PotB and PotC) and a solute-binding protein (PotD).

The protein localises to the cell membrane. It carries out the reaction ATP + H2O + polyamine-[polyamine-binding protein]Side 1 = ADP + phosphate + polyamineSide 2 + [polyamine-binding protein]Side 1.. In terms of biological role, part of the ABC transporter complex PotABCD involved in spermidine/putrescine import. Responsible for energy coupling to the transport system. The sequence is that of Spermidine/putrescine import ATP-binding protein PotA from Frankia alni (strain DSM 45986 / CECT 9034 / ACN14a).